We begin with the raw amino-acid sequence, 209 residues long: Tektin bundle-interacting protein 1 (209 aa).

As to quaternary structure, microtubule inner protein component of sperm flagellar doublet microtubules.

Its subcellular location is the cytoplasm. The protein resides in the cytoskeleton. It is found in the cilium axoneme. It localises to the flagellum axoneme. In terms of biological role, microtubule inner protein (MIP) part of the dynein-decorated doublet microtubules (DMTs) in cilia axoneme, which is required for motile cilia beating. Located at the center of the tektin bundle where may function to recruit tektins or stabilize the bundle. The chain is Tektin bundle-interacting protein 1 (TEKTIP1) from Macaca fascicularis (Crab-eating macaque).